Here is a 1392-residue protein sequence, read N- to C-terminus: Condensin complex subunit 1 (1392 aa).

Residues 1–593 (MSPHNFEFHL…TGSKDSPSVP (593 aa)) form an interaction with SMC2 and SMC4 region. A phosphoserine mark is found at Ser20 and Ser575. 3 disordered regions span residues 569–602 (EAST…QSND), 945–966 (REEQ…ETTM), and 1293–1392 (FETG…RHRS). Residues 945-960 (REEQEHRAKEPKEKTA) are compositionally biased toward basic and acidic residues. A phosphoserine mark is found at Ser1300, Ser1305, Ser1320, and Ser1323. At Thr1329 the chain carries Phosphothreonine. The Bipartite nuclear localization signal signature appears at 1332–1353 (PRRTKPGRPQTQQRKKSQRKAK). The span at 1344–1353 (QRKKSQRKAK) shows a compositional bias: basic residues. Phosphoserine occurs at positions 1358, 1361, 1362, and 1367. The span at 1360–1373 (ESSEDELSAEMTEE) shows a compositional bias: acidic residues. Phosphothreonine; by CDK1 is present on residues Thr1375 and Thr1380. A Phosphoserine modification is found at Ser1386.

It belongs to the CND1 (condensin subunit 1) family. In terms of assembly, component of the condensin complex, which contains the SMC2 and SMC4 heterodimer, and three non SMC subunits that probably regulate the complex: NCAPH/BRRN1, NCAPD2/CAPD2 and NCAPG. Interacts with histones H1 and H3. Post-translationally, phosphorylated by CDK1. Its phosphorylation, as well as that of NCAPH and NCAPG subunits, activates the condensin complex and is required for chromosome condensation.

The protein localises to the nucleus. Its subcellular location is the cytoplasm. It is found in the chromosome. Its function is as follows. Regulatory subunit of the condensin complex, a complex required for conversion of interphase chromatin into mitotic-like condense chromosomes. The condensin complex probably introduces positive supercoils into relaxed DNA in the presence of type I topoisomerases and converts nicked DNA into positive knotted forms in the presence of type II topoisomerases. May target the condensin complex to DNA via its C-terminal domain. May promote the resolution of double-strand DNA catenanes (intertwines) between sister chromatids. Condensin-mediated compaction likely increases tension in catenated sister chromatids, providing directionality for type II topoisomerase-mediated strand exchanges toward chromatid decatenation. Required for decatenation of non-centromeric ultrafine DNA bridges during anaphase. Early in neurogenesis, may play an essential role to ensure accurate mitotic chromosome condensation in neuron stem cells, ultimately affecting neuron pool and cortex size. This chain is Condensin complex subunit 1 (Ncapd2), found in Mus musculus (Mouse).